The chain runs to 1175 residues: Double-stranded RNA-specific adenosine deaminase (1175 aa).

2 positions are modified to asymmetric dimethylarginine: Arg-30 and Arg-42. The Z-binding 1 domain occupies 135–201 (LSISQNPEQK…GKPPLWSLVP (67 aa)). Residues 135 to 204 (LSISQNPEQK…PLWSLVPLSQ (70 aa)) are interaction with Z-DNA. The interval 207 to 239 (TQPPRAVNSDKEVPRGEPDLDSEDGDPASDLEG) is disordered. Positions 214-224 (NSDKEVPRGEP) are enriched in basic and acidic residues. Positions 225-235 (DLDSEDGDPAS) are enriched in acidic residues. 2 positions are modified to phosphoserine: Ser-228 and Ser-235. The Z-binding 2 domain maps to 243–307 (LLDMAEIKEK…ATPPIWYLTD (65 aa)). Residues 315 to 384 (MKRSTHSGPA…ARPGPVRLRP (70 aa)) are disordered. Basic and acidic residues predominate over residues 357 to 376 (KRVENGQEPVTKYESRHEAR). A Glycyl lysine isopeptide (Lys-Gly) (interchain with G-Cter in SUMO); alternate cross-link involves residue Lys-368. Lys-368 participates in a covalent cross-link: Glycyl lysine isopeptide (Lys-Gly) (interchain with G-Cter in SUMO1); alternate. Lys-368 is covalently cross-linked (Glycyl lysine isopeptide (Lys-Gly) (interchain with G-Cter in SUMO2); alternate). Ser-431 is modified (phosphoserine). The region spanning 453 to 521 (NPVSGLLEYA…AVKAMAILLR (69 aa)) is the DRBM 1 domain. The interval 524–561 (KAKDSGQPEELSNCPMEEDPEKPAESQPPSSSATSLFS) is disordered. Over residues 550 to 561 (QPPSSSATSLFS) the composition is skewed to polar residues. 3 positions are modified to phosphoserine: Ser-564, Ser-579, and Ser-586. The 69-residue stretch at 564-632 (SPVTTLLECM…AEEAMKALQE (69 aa)) folds into the DRBM 2 domain. The tract at residues 632 to 652 (EEAANSADDQSGGANTDSLDE) is disordered. Over residues 638-648 (ADDQSGGANTD) the composition is skewed to polar residues. The tract at residues 662 to 671 (IGELVRYLNT) is N-terminal extension of DRBM 3 and constituent of a bi-partite nuclear localization signal. The DRBM 3 domain maps to 672 to 740 (NPVGGLLEYA…ADAALRVLIG (69 aa)). Positions 741-747 (ESEKAEQ) are C-terminal extension of DRBM 3 and constituent of a bi-partite nuclear localization signal. Residue Thr-754 is modified to Phosphothreonine. Residues Ser-760, Ser-769, and Ser-771 each carry the phosphoserine modification. Residue Lys-821 forms a Glycyl lysine isopeptide (Lys-Gly) (interchain with G-Cter in SUMO2) linkage. The 336-residue stretch at 832 to 1167 (SLGTGNRCVK…ISKPQEEKNF (336 aa)) folds into the A to I editase domain. His-856 is a binding site for Zn(2+). The Proton donor role is filled by Glu-858. Cys-912 and Cys-982 together coordinate Zn(2+).

Homodimer. Homodimerization is essential for its catalytic activity. Isoform 5 can form heterodimers with ADARB1/ADAR2. Isoform 1 interacts with ILF2/NF45 and ILF3/NF90. Binding to ILF3/NF90 up-regulates ILF3-mediated gene expression. Isoform 1 and isoform 5 (via DRBM 3 domain) interact with TNPO1. Isoform 5 (via DRBM domains) interacts with XPO5. Isoform 1 and isoform 5 can interact with EIF2AK2/PKR and UPF1. Post-translationally, sumoylation reduces RNA-editing activity. As to expression, detected in brain.

Its subcellular location is the cytoplasm. The protein localises to the nucleus. The catalysed reaction is adenosine in double-stranded RNA + H2O + H(+) = inosine in double-stranded RNA + NH4(+). Functionally, catalyzes the hydrolytic deamination of adenosine to inosine in double-stranded RNA (dsRNA) referred to as A-to-I RNA editing. This may affect gene expression and function in a number of ways that include mRNA translation by changing codons and hence the amino acid sequence of proteins; pre-mRNA splicing by altering splice site recognition sequences; RNA stability by changing sequences involved in nuclease recognition; genetic stability in the case of RNA virus genomes by changing sequences during viral RNA replication; and RNA structure-dependent activities such as microRNA production or targeting or protein-RNA interactions. Can edit both viral and cellular RNAs and can edit RNAs at multiple sites (hyper-editing) or at specific sites (site-specific editing). Its cellular RNA substrates include: bladder cancer-associated protein (BLCAP), neurotransmitter receptors for glutamate (GRIA2) and serotonin (HTR2C) and GABA receptor (GABRA3). Site-specific RNA editing of transcripts encoding these proteins results in amino acid substitutions which consequently alters their functional activities. Exhibits low-level editing at the GRIA2 Q/R site, but edits efficiently at the R/G site and HOTSPOT1. Does not affect polyomavirus replication but provides protection against virus-induced cytopathic effects. Essential for embryonic development and cell survival and plays a critical role in the maintenance of hematopoietic stem cells. In Rattus norvegicus (Rat), this protein is Double-stranded RNA-specific adenosine deaminase (Adar).